The primary structure comprises 202 residues: 7-methyl-GTP pyrophosphatase (202 aa).

Asp70 (proton acceptor) is an active-site residue.

This sequence belongs to the Maf family. YceF subfamily. A divalent metal cation is required as a cofactor.

The protein resides in the cytoplasm. It catalyses the reaction N(7)-methyl-GTP + H2O = N(7)-methyl-GMP + diphosphate + H(+). In terms of biological role, nucleoside triphosphate pyrophosphatase that hydrolyzes 7-methyl-GTP (m(7)GTP). May have a dual role in cell division arrest and in preventing the incorporation of modified nucleotides into cellular nucleic acids. The chain is 7-methyl-GTP pyrophosphatase from Pseudoalteromonas translucida (strain TAC 125).